The following is a 667-amino-acid chain: UvrABC system protein B (667 aa).

The region spanning 31 to 414 (KNFEAGAKAQ…EAEQTDIQVD (384 aa)) is the Helicase ATP-binding domain. 44-51 (GATGTGKT) provides a ligand contact to ATP. Positions 97–120 (YYDYYQPEAYVPSSDTYIEKDSSI) match the Beta-hairpin motif. Positions 435-597 (QIDDLVGEIN…ITPKTIIKPI (163 aa)) constitute a Helicase C-terminal domain. In terms of domain architecture, UVR spans 630–665 (LEMVERLSEQMRLAAKKLDFEQAATLRDTILELKSE).

Belongs to the UvrB family. Forms a heterotetramer with UvrA during the search for lesions. Interacts with UvrC in an incision complex.

It localises to the cytoplasm. The UvrABC repair system catalyzes the recognition and processing of DNA lesions. A damage recognition complex composed of 2 UvrA and 2 UvrB subunits scans DNA for abnormalities. Upon binding of the UvrA(2)B(2) complex to a putative damaged site, the DNA wraps around one UvrB monomer. DNA wrap is dependent on ATP binding by UvrB and probably causes local melting of the DNA helix, facilitating insertion of UvrB beta-hairpin between the DNA strands. Then UvrB probes one DNA strand for the presence of a lesion. If a lesion is found the UvrA subunits dissociate and the UvrB-DNA preincision complex is formed. This complex is subsequently bound by UvrC and the second UvrB is released. If no lesion is found, the DNA wraps around the other UvrB subunit that will check the other stand for damage. The chain is UvrABC system protein B from Latilactobacillus sakei subsp. sakei (strain 23K) (Lactobacillus sakei subsp. sakei).